A 377-amino-acid chain; its full sequence is Nucleoside diphosphate kinase homolog 7 (377 aa).

A DM10 domain is found at 3-91 (HSERFVFIAE…YTARQLGSKK (89 aa)).

Belongs to the NDK family. In terms of assembly, component of sperm flagellar doublet microtubules. Component of the gamma-tubulin ring complex. As to expression, expressed in trachea multiciliated cells.

It is found in the cytoplasm. The protein resides in the cytoskeleton. It localises to the microtubule organizing center. The protein localises to the centrosome. Its subcellular location is the nucleus. It is found in the spindle. The protein resides in the cilium axoneme. It localises to the flagellum axoneme. The protein localises to the cell projection. Its subcellular location is the cilium. Functionally, possesses an intrinsic kinase activity. Displays 3'-5' exonuclease activity with a preference for single-stranded DNA. Does not seem to have nucleoside diphosphate kinase activity. Functional component of the gamma-tubulin ring complex, implicated in the regulation of the microtubule-nucleating activity of the gamma-tubulin ring complex in centrosomes, in a kinase activity-dependent manner. Part of the dynein-decorated doublet microtubules (DMTs) in cilia axoneme, which is required for motile cilia beating. The protein is Nucleoside diphosphate kinase homolog 7 (NME7) of Bos taurus (Bovine).